We begin with the raw amino-acid sequence, 553 residues long: COP9 signalosome complex subunit 10 (553 aa).

Over residues alanine 21–proline 46 the composition is skewed to acidic residues. Residues alanine 21–leucine 47 form a disordered region. The 177-residue stretch at leucine 298–arginine 474 folds into the PCI domain.

In terms of assembly, component of a COP9 signalosome-like (CSN) complex.

It is found in the cytoplasm. The protein resides in the nucleus. Functionally, component of the COP9 signalosome (CSN) complex that acts as an regulator of the ubiquitin (Ubl) conjugation pathway by mediating the deneddylation of the cullin subunit of SCF-type E3 ubiquitin-protein ligase complexes. The CSN complex is involved in the regulation of the mating pheromone response. The polypeptide is COP9 signalosome complex subunit 10 (RRI2) (Eremothecium gossypii (strain ATCC 10895 / CBS 109.51 / FGSC 9923 / NRRL Y-1056) (Yeast)).